The sequence spans 316 residues: MLNVEPSFAEELRSSGVSLSATYLGSVPVVESINVMVSEMRVQVVSECIQHVAATVGVTAAREINPVVSRVIGEVKKENFPVDINISSKMIKIIKQSRLIQRHPFSFFSFGAQGQKGTDTELMFGYIAKNKDGTDRRCHVVFIEDVHKLIDVLTTAINVNTFDAQANASTSNDGFTVPAPPMRHRSSLHRQSFVSNCRAPTVTEDVVGKVWYHGNLSREDAQALLKTEGDFLVRQSDHTPGKYVLSGRTAENEHKHLILLDNHNRVRTRDRTFSNISELIDYHVNNGMAVRSEGRDRETSLNLIRPVPCPGSDDIE.

The region spanning 16–158 (GVSLSATYLG…LIDVLTTAIN (143 aa)) is the PID domain. The SH2 domain maps to 211 to 307 (WYHGNLSRED…ETSLNLIRPV (97 aa)). The interval 292-316 (SEGRDRETSLNLIRPVPCPGSDDIE) is disordered.

In terms of assembly, interacts (via PID domain) with daf-2 (via cytoplasmic domain). Interacts with mek-1; the interaction is independent of mek-1 catalytic activity and is constitutive. Interacts (via N-terminus) with mlk-1 (via NPQY motif when phosphorylated on tyrosine residue). Does not interact with jkk-1 or sek-1. Interacts (via SH2 domain) with svh-2. Interacts with svh-4. As to expression, expressed in hypodermis, intestine, head and tail neurons, pharynx, gonads, vulva and body muscles.

The protein resides in the cytoplasm. The protein localises to the nucleus. It is found in the cell membrane. Scaffold protein which plays an important role in the activation of the JNK pathway composed of mlk-1, mek-1 and kgb-1; by bringing together mek-1 and mlk-1, promotes mlk-1-mediated phosphorylation and activation of mek-1 which in turn phosphorylates kgb-1. In addition, negatively modulates the activation of the insulin/IGF-1-like signaling (IIS) probably by inhibiting the insulin receptor daf-2. Positively regulates the activity of the transcription factor daf-16/FOXO by both inhibiting IIS and activating the JNK pathway. Plays a role in maintaining gonadal basement membrane integrity through activation of the JNK pathway components mek-1 and jnk-1. Involved in the response to several environmental stresses including heavy metal ions (Cu(2+) and Cd(2+)), heat, oxidative and protein misfolding (ER) stresses. Plays a role in gonad and germline development following the L1 diapause. Plays a role in life span and egg laying. Plays a role in axon regeneration after injury. The protein is SHC-transforming protein homolog 1 of Caenorhabditis elegans.